Here is a 307-residue protein sequence, read N- to C-terminus: Type 2A encapsulin shell protein (307 aa).

This sequence belongs to the encapsulin family. Family 2A subfamily. In terms of assembly, homooligomeric. The encapsulin nanocompartment is formed by 60 subunits; monomers form pentamers which assemble to form shells. There are 12 charged pores where the pentamers meet as well as 3-fold axis channels and dimer channels. The N-terminus is blocked.

It is found in the encapsulin nanocompartment. It localises to the cytoplasm. The protein resides in the cytosol. Its subcellular location is the cell membrane. Its function is as follows. Shell component of a type 2A encapsulin nanocompartment. Forms encapsulin nanocompartments about 24 nm in diameter from 60 monomers. Probably encapsulates at least cysteine desulfurase (CyD, AC O32975) and allows passage of cysteine into its interior, probably involved in sulfur metabolism. Expression in M.smegmatis generates a multimeric protein, whereas expression in E.coli does not. This Mycobacterium leprae (strain TN) protein is Type 2A encapsulin shell protein.